The following is a 359-amino-acid chain: Phosphate acyltransferase (359 aa).

It belongs to the PlsX family. As to quaternary structure, homodimer. Probably interacts with PlsY.

It is found in the cytoplasm. It catalyses the reaction a fatty acyl-[ACP] + phosphate = an acyl phosphate + holo-[ACP]. It functions in the pathway lipid metabolism; phospholipid metabolism. Its function is as follows. Catalyzes the reversible formation of acyl-phosphate (acyl-PO(4)) from acyl-[acyl-carrier-protein] (acyl-ACP). This enzyme utilizes acyl-ACP as fatty acyl donor, but not acyl-CoA. The chain is Phosphate acyltransferase from Salmonella agona (strain SL483).